The primary structure comprises 249 residues: Type III pantothenate kinase (249 aa).

An ATP-binding site is contributed by Asp8–Lys15. Residues Tyr95 and Gly102 to Arg105 contribute to the substrate site. Asp104 serves as the catalytic Proton acceptor. Asp125 contributes to the K(+) binding site. Position 128 (Thr128) interacts with ATP. Thr179 contacts substrate.

It belongs to the type III pantothenate kinase family. In terms of assembly, homodimer. Requires NH4(+) as cofactor. K(+) is required as a cofactor.

The protein localises to the cytoplasm. The catalysed reaction is (R)-pantothenate + ATP = (R)-4'-phosphopantothenate + ADP + H(+). It functions in the pathway cofactor biosynthesis; coenzyme A biosynthesis; CoA from (R)-pantothenate: step 1/5. Its function is as follows. Catalyzes the phosphorylation of pantothenate (Pan), the first step in CoA biosynthesis. The sequence is that of Type III pantothenate kinase from Alkalilimnicola ehrlichii (strain ATCC BAA-1101 / DSM 17681 / MLHE-1).